Reading from the N-terminus, the 281-residue chain is MSIKQEVFLSSGEGGIIQNNYNHSNNYNIYEHNIINEPNISVVVGRTGGGMTTVVQNIVDKIVTINNGDIEVIILTSNPKIYPNVDQCYSLSDIDLAHNYIISNPQNKKILVIDDFFKGVLRDKHTELIINHACLNLHIVLFVQCFVNFTPLIKNNLTYLFINNSVASSDIKSMYDRYLAPKINYRTFEKIMTRLETNRELSLVIVNNGLSDKLRIFESNFTLNPIYKYRCPNLQKQNKEPIDKQSRKKNIIREINDIKSKINDLSNYMDNLISELDDLFD.

Residues 242-281 adopt a coiled-coil conformation; it reads IDKQSRKKNIIREINDIKSKINDLSNYMDNLISELDDLFD.

This is an uncharacterized protein from Acanthamoeba polyphaga (Amoeba).